Reading from the N-terminus, the 380-residue chain is uncharacterized protein (380 aa).

The 4Fe-4S ferredoxin-type domain maps to 287-318 (LRPKIYQDKCKNCRECLVEKYCPTFAIKRENG).

This is an uncharacterized protein from Methanocaldococcus jannaschii (strain ATCC 43067 / DSM 2661 / JAL-1 / JCM 10045 / NBRC 100440) (Methanococcus jannaschii).